The primary structure comprises 163 residues: 3-isopropylmalate dehydratase small subunit 2 (163 aa).

It belongs to the LeuD family. LeuD type 2 subfamily. As to quaternary structure, heterodimer of LeuC and LeuD.

It catalyses the reaction (2R,3S)-3-isopropylmalate = (2S)-2-isopropylmalate. It participates in amino-acid biosynthesis; L-leucine biosynthesis; L-leucine from 3-methyl-2-oxobutanoate: step 2/4. Functionally, catalyzes the isomerization between 2-isopropylmalate and 3-isopropylmalate, via the formation of 2-isopropylmaleate. The protein is 3-isopropylmalate dehydratase small subunit 2 (leuD2) of Pyrococcus abyssi (strain GE5 / Orsay).